The following is a 188-amino-acid chain: Adenine phosphoribosyltransferase (188 aa).

The protein belongs to the purine/pyrimidine phosphoribosyltransferase family. As to quaternary structure, homodimer.

It localises to the cytoplasm. The enzyme catalyses AMP + diphosphate = 5-phospho-alpha-D-ribose 1-diphosphate + adenine. It functions in the pathway purine metabolism; AMP biosynthesis via salvage pathway; AMP from adenine: step 1/1. In terms of biological role, catalyzes a salvage reaction resulting in the formation of AMP, that is energically less costly than de novo synthesis. This Frankia casuarinae (strain DSM 45818 / CECT 9043 / HFP020203 / CcI3) protein is Adenine phosphoribosyltransferase.